The primary structure comprises 293 residues: ATP synthase gamma chain (293 aa).

It belongs to the ATPase gamma chain family. In terms of assembly, F-type ATPases have 2 components, CF(1) - the catalytic core - and CF(0) - the membrane proton channel. CF(1) has five subunits: alpha(3), beta(3), gamma(1), delta(1), epsilon(1). CF(0) has three main subunits: a, b and c.

It localises to the cell inner membrane. Its function is as follows. Produces ATP from ADP in the presence of a proton gradient across the membrane. The gamma chain is believed to be important in regulating ATPase activity and the flow of protons through the CF(0) complex. This chain is ATP synthase gamma chain, found in Gluconacetobacter diazotrophicus (strain ATCC 49037 / DSM 5601 / CCUG 37298 / CIP 103539 / LMG 7603 / PAl5).